The primary structure comprises 662 residues: Protein Aster-C (662 aa).

A disordered region spans residues 1–33 (MEGALTARQIVNEGDSSLATELQEEPEESPGPV). Residues 70–176 (EYRQQFTHLP…LIIFRLWQNV (107 aa)) enclose the GRAM domain. Residues 212–294 (VEENVQPRSP…EKRISRAPSK (83 aa)) form a disordered region. Over residues 240 to 250 (VSFTQESVSRA) the composition is skewed to polar residues. Residues 265 to 276 (LGKEDSQSERNV) are compositionally biased toward basic and acidic residues. A VASt domain is found at 326–497 (QGRLYINRVF…DLLMEESVLS (172 aa)). The disordered stretch occupies residues 506–530 (HSSLRRRRRTLNRTAEPVPKLSSQR). Residues 507-516 (SSLRRRRRTL) show a composition bias toward basic residues. The chain crosses the membrane as a helical span at residues 557 to 577 (LIVVMSIFLLLLVLLNVTLFL).

Highly expressed in the liver. Also found in the testis.

It is found in the endoplasmic reticulum membrane. It localises to the cell membrane. Its function is as follows. Cholesterol transporter that mediates non-vesicular transport of cholesterol from the plasma membrane (PM) to the endoplasmic reticulum (ER). Contains unique domains for binding cholesterol and the PM, thereby serving as a molecular bridge for the transfer of cholesterol from the PM to the ER. Plays a crucial role in cholesterol homeostasis and has the unique ability to localize to the PM based on the level of membrane cholesterol. In lipid-poor conditions localizes to the ER membrane and in response to excess cholesterol in the PM is recruited to the endoplasmic reticulum-plasma membrane contact sites (EPCS) which is mediated by the GRAM domain. At the EPCS, the sterol-binding VASt/ASTER domain binds to the cholesterol in the PM and facilitates its transfer from the PM to ER. In Mus musculus (Mouse), this protein is Protein Aster-C (Gramd1c).